We begin with the raw amino-acid sequence, 204 residues long: Casparian strip membrane protein 2 (204 aa).

The Cytoplasmic segment spans residues 1–42 (MKNESTFIDVPAESSSAMKGKAPLIGVARDHTTSGSGGYNRG). A helical transmembrane segment spans residues 43–63 (LAIFDFLLRLAAIVAALAAAA). Residues 64-92 (TMGTSDETLPFFTQFLQFEASYDDLPTFQ) are Extracellular-facing. A helical transmembrane segment spans residues 93 to 113 (FFVIAMALVGGYLVLSLPISV). The Cytoplasmic portion of the chain corresponds to 114 to 125 (VTILRPLATAPR). A helical membrane pass occupies residues 126 to 146 (LLLLVLDTGVLALNTAAASSA). Residues 147–178 (AAISYLAHSGNQNTNWLPICQQFGDFCQKSSG) are Extracellular-facing. A helical transmembrane segment spans residues 179–199 (AVVSAFVSVVFFTILVVISGV). Over 200–204 (ALKRH) the chain is Cytoplasmic.

The protein belongs to the Casparian strip membrane proteins (CASP) family. As to quaternary structure, homodimer and heterodimers with other CASP proteins. Interacts with CASP1, CASP3 and CASP4.

It is found in the cell membrane. In terms of biological role, regulates membrane-cell wall junctions and localized cell wall deposition. Required for establishment of the Casparian strip membrane domain (CSD) and the subsequent formation of Casparian strips, a cell wall modification of the root endodermis that determines an apoplastic barrier between the intraorganismal apoplasm and the extraorganismal apoplasm and prevents lateral diffusion. This is Casparian strip membrane protein 2 (CASP2) from Arabidopsis thaliana (Mouse-ear cress).